The chain runs to 675 residues: Protein kintoun (675 aa).

Disordered regions lie at residues 98-131 (ASKK…KQGA), 265-293 (AGEG…TAPP), 310-340 (EGGA…AVAK), and 509-659 (EAAH…AAPT). Over residues 102-113 (QQQEQEKQEKEQ) the composition is skewed to basic and acidic residues. A compositionally biased stretch (low complexity) spans 279-293 (VPGVPDLPGAKTAPP). Residues 529–543 (AAAASSGAAPAPAAA) show a composition bias toward low complexity. Positions 544–553 (SEEEEEEDKE) are enriched in acidic residues. Low complexity predominate over residues 564 to 577 (DPAAAAAAAGASSG). The span at 579-596 (ELTENERKWRELHARQQQ) shows a compositional bias: basic and acidic residues. Composition is skewed to low complexity over residues 604–617 (AAEA…AAAE) and 628–659 (VAQG…AAPT).

The protein belongs to the PIH1 family. Kintoun subfamily.

Its subcellular location is the cytoplasm. Functionally, required for cytoplasmic pre-assembly of axonemal dyneins, thereby playing a central role in motility in cilia and flagella. Involved in pre-assembly of dynein arm complexes in the cytoplasm before intraflagellar transport loads them for the ciliary compartment. The chain is Protein kintoun (pf13) from Chlamydomonas reinhardtii (Chlamydomonas smithii).